Here is a 145-residue protein sequence, read N- to C-terminus: Monooxygenase AacuP (145 aa).

The protein belongs to the avfA family.

It functions in the pathway secondary metabolite biosynthesis. In terms of biological role, monooxygenase; part of the gene cluster that mediates the biosynthesis of the tetrahydroxanthone dimer secalonic acid D. The pathway begins with the synthesis of atrochrysone thioester by the polyketide synthase AacuL. The atrochrysone carboxyl ACP thioesterase AacuM then breaks the thioester bond and releases the atrochrysone carboxylic acid from AacuL. Atrochrysone carboxylic acid is decarboxylated by the decarboxylase AacuI, and oxidized by the anthrone oxygenase AacuG to yield emodin. Emodin is then reduced to emodin hydroquinone by a yet unidentified oxidoreductase. A-ring reduction by the short chain dehydrogenase AacuN, dehydration by the scytalone dehydratase-like protein AacuK and probable spontaneous re-oxidation, results in overall deoxygenation to chrysophanol. Baeyer-Villiger oxidation by the Baeyer-Villiger monooxygenase (BVMO) AacuH then yields monodictyphenone. Monodictyphenone is transformed into compounds with the tetrahydroxanthone skeleton via methylesterification by the methyltransferase AacuQ, followed by the action of the flavin-dependent monooxygenase AacuC, the isomerase AacuP, and the short chain dehydrogenase/reductase AacuF or AacuD. AacuF and AacuD should accept the same compound as a substrate but perform the ketoreduction with a different stereoselectivity, thus yielding blennolides B and A, respectively. In the final step of the biosynthesis, the cytochrome P450 monooxygenase AacuE accepts blennolide B and/or blennolide A to conduct the dimerization reaction to furnish the tetrahydroxanthone dimers, secalonic acids D, B, and F. The polypeptide is Monooxygenase AacuP (Aspergillus aculeatus (strain ATCC 16872 / CBS 172.66 / WB 5094)).